The following is a 348-amino-acid chain: Rhodopsin (348 aa).

The residue at position 1 (Met1) is an N-acetylmethionine. Topologically, residues 1–36 (MNGTEGLNFYVPFSNKTGVVRSPFEYPQYYLAEPWQ) are extracellular. N-linked (GlcNAc...) asparagine glycans are attached at residues Asn2 and Asn15. A helical membrane pass occupies residues 37–61 (FSVLAAYMFLLIVLGFPINFLTLYV). Over 62–73 (TVQHKKLRTPLN) the chain is Cytoplasmic. The helical transmembrane segment at 74–99 (YILLNLAVANLFMVFGGFTTTLYTSL) threads the bilayer. Over 100 to 111 (HAYFVFGPTGCN) the chain is Extracellular. Cys110 and Cys187 form a disulfide bridge. Residues 112–133 (LEGFFATLGGEIALWSLVVLAI) traverse the membrane as a helical segment. Residues 134–136 (ERY) carry the 'Ionic lock' involved in activated form stabilization motif. Residues 134–152 (ERYVVVCKPMSNFRFGENH) are Cytoplasmic-facing. The chain crosses the membrane as a helical span at residues 153–173 (AIMGLALTWIMAMACAAAPLV). Residues 174–202 (GWSRYIPEGMQCSCGIDYYTSRQEVNNES) lie on the Extracellular side of the membrane. Position 201 (Glu201) interacts with Zn(2+). A helical membrane pass occupies residues 203 to 227 (FVIYMFVVHFTIPLVIIFFCYGQLV). The Cytoplasmic segment spans residues 228-252 (FTVKEAAAQQQESATTQKAEKEVTR). A helical membrane pass occupies residues 253 to 274 (MVIIMVVAFLICWVPYASVAFY). The Extracellular segment spans residues 275-286 (IFTHQGSDFGPI). A Zn(2+)-binding site is contributed by Gln279. The helical transmembrane segment at 287 to 306 (FMTIPSFFAKSSSIYNPVIY) threads the bilayer. At Lys296 the chain carries N6-(retinylidene)lysine. Residues 307-348 (IMMNKQFRNCMLTTLCCGRNPLGDDEASTTASKTETSQVAPA) lie on the Cytoplasmic side of the membrane. S-palmitoyl cysteine attachment occurs at residues Cys322 and Cys323. At Ser334 the chain carries Phosphoserine. Phosphothreonine occurs at positions 335 and 336. Ser338 carries the phosphoserine modification. A phosphothreonine mark is found at Thr340 and Thr342. Phosphoserine is present on Ser343.

This sequence belongs to the G-protein coupled receptor 1 family. Opsin subfamily. As to quaternary structure, homodimer. May form a complex composed of RHO, GRK1 and RCVRN in a Ca(2+)-dependent manner; RCVRN prevents the interaction between GRK1 and RHO. Interacts with GRK1. Interacts (phosphorylated form) with SAG. Interacts with GNAT1. Interacts with GNAT3. SAG and G-proteins compete for a common binding site. Interacts with PRCD; the interaction promotes PRCD stability. Forms a complex with ASAP1 and ARF4. Forms a complex with ASAP1, RAB11A, Rabin8/RAB3IP, ARF4 and RAB11FIP3; the complex regulates Golgi-to-cilia rhodopsin/RHO transport in photoreceptors. Contains one covalently linked retinal chromophore. Upon light absorption, the covalently bound 11-cis-retinal is converted to all-trans-retinal. After hydrolysis of the Schiff base and release of the covalently bound all-trans-retinal, active rhodopsin is regenerated by binding of a fresh molecule of 11-cis-retinal.

It localises to the membrane. The protein resides in the cell projection. The protein localises to the cilium. It is found in the photoreceptor outer segment. Its function is as follows. Photoreceptor required for image-forming vision at low light intensity. Light-induced isomerization of 11-cis to all-trans retinal triggers a conformational change that activates signaling via G-proteins. Signaling mediates the activation of phospholipase C. Subsequent receptor phosphorylation mediates displacement of the bound G-protein alpha subunit by arrestin and terminates signaling. This Tursiops truncatus (Atlantic bottle-nosed dolphin) protein is Rhodopsin (RHO).